The primary structure comprises 179 residues: Protein GrpE (179 aa).

Residues 1–10 (MSKKEEKQEE) show a composition bias toward basic and acidic residues. The tract at residues 1–23 (MSKKEEKQEELQEEMEAVDAAGV) is disordered.

The protein belongs to the GrpE family. Homodimer.

It localises to the cytoplasm. Functionally, participates actively in the response to hyperosmotic and heat shock by preventing the aggregation of stress-denatured proteins, in association with DnaK and GrpE. It is the nucleotide exchange factor for DnaK and may function as a thermosensor. Unfolded proteins bind initially to DnaJ; upon interaction with the DnaJ-bound protein, DnaK hydrolyzes its bound ATP, resulting in the formation of a stable complex. GrpE releases ADP from DnaK; ATP binding to DnaK triggers the release of the substrate protein, thus completing the reaction cycle. Several rounds of ATP-dependent interactions between DnaJ, DnaK and GrpE are required for fully efficient folding. The chain is Protein GrpE from Enterococcus faecalis (strain ATCC 700802 / V583).